A 318-amino-acid polypeptide reads, in one-letter code: Malate dehydrogenase (318 aa).

NAD(+)-binding positions include 10-15 (GAGNIG) and D34. 2 residues coordinate substrate: R83 and R89. NAD(+)-binding positions include N96 and 119–121 (ITN). The substrate site is built by N121 and R152. H176 (proton acceptor) is an active-site residue.

The protein belongs to the LDH/MDH superfamily. MDH type 3 family.

It carries out the reaction (S)-malate + NAD(+) = oxaloacetate + NADH + H(+). Functionally, catalyzes the reversible oxidation of malate to oxaloacetate. The protein is Malate dehydrogenase of Rhodospirillum rubrum (strain ATCC 11170 / ATH 1.1.1 / DSM 467 / LMG 4362 / NCIMB 8255 / S1).